The following is a 271-amino-acid chain: ABC transporter I family member 10 (271 aa).

An ABC transporter domain is found at 40-267 (VECRNLCFSV…IKAKQSSYID (228 aa)). 77 to 84 (GPNGCGKS) serves as a coordination point for ATP.

Belongs to the ABC transporter superfamily. ABCI family.

The polypeptide is ABC transporter I family member 10 (ABCI10) (Arabidopsis thaliana (Mouse-ear cress)).